The sequence spans 339 residues: DnaJ homolog subfamily C member 22 (339 aa).

The 47-residue stretch at 4 to 50 folds into the TM2 domain; the sequence is GLLMTYVLWALGGPVGLHHLYLGRDSHALLWMLTLGGGGLGWLWEFW. Transmembrane regions (helical) follow at residues 5 to 25, 30 to 50, 81 to 101, 105 to 125, 135 to 155, 185 to 205, and 218 to 238; these read LLMT…HLYL, HALL…WEFW, FASQ…SLSS, FYIV…AAVG, LGAA…ILPI, VGLA…YNTA, and FLSW…VLLL. The J domain maps to 277–339; it reads LAHQVLGVPE…LSQPKKPRAS (63 aa).

It localises to the membrane. Functionally, may function as a co-chaperone. The chain is DnaJ homolog subfamily C member 22 (Dnajc22) from Mus musculus (Mouse).